Consider the following 290-residue polypeptide: Probable branched-chain-amino-acid aminotransferase (290 aa).

Residue lysine 155 is modified to N6-(pyridoxal phosphate)lysine.

This sequence belongs to the class-IV pyridoxal-phosphate-dependent aminotransferase family. It depends on pyridoxal 5'-phosphate as a cofactor.

The enzyme catalyses L-leucine + 2-oxoglutarate = 4-methyl-2-oxopentanoate + L-glutamate. It catalyses the reaction L-isoleucine + 2-oxoglutarate = (S)-3-methyl-2-oxopentanoate + L-glutamate. The catalysed reaction is L-valine + 2-oxoglutarate = 3-methyl-2-oxobutanoate + L-glutamate. The protein operates within amino-acid biosynthesis; L-isoleucine biosynthesis; L-isoleucine from 2-oxobutanoate: step 4/4. Its pathway is amino-acid biosynthesis; L-leucine biosynthesis; L-leucine from 3-methyl-2-oxobutanoate: step 4/4. It participates in amino-acid biosynthesis; L-valine biosynthesis; L-valine from pyruvate: step 4/4. In terms of biological role, acts on leucine, isoleucine and valine. This is Probable branched-chain-amino-acid aminotransferase (ilvE) from Rickettsia felis (strain ATCC VR-1525 / URRWXCal2) (Rickettsia azadi).